The primary structure comprises 427 residues: Trigger factor (427 aa).

One can recognise a PPIase FKBP-type domain in the interval 163–248 (GDTAVIDFEG…VHEIKAKELP (86 aa)).

This sequence belongs to the FKBP-type PPIase family. Tig subfamily.

The protein resides in the cytoplasm. The catalysed reaction is [protein]-peptidylproline (omega=180) = [protein]-peptidylproline (omega=0). In terms of biological role, involved in protein export. Acts as a chaperone by maintaining the newly synthesized protein in an open conformation. Functions as a peptidyl-prolyl cis-trans isomerase. The chain is Trigger factor from Bacillus cytotoxicus (strain DSM 22905 / CIP 110041 / 391-98 / NVH 391-98).